The following is a 921-amino-acid chain: Isoleucine--tRNA ligase (921 aa).

Positions 57-67 (PYANGDIHMGH) match the 'HIGH' region motif. E553 is a binding site for L-isoleucyl-5'-AMP. A 'KMSKS' region motif is present at residues 594 to 598 (KMSKS). An ATP-binding site is contributed by K597.

It belongs to the class-I aminoacyl-tRNA synthetase family. IleS type 1 subfamily. Monomer.

The protein localises to the cytoplasm. It carries out the reaction tRNA(Ile) + L-isoleucine + ATP = L-isoleucyl-tRNA(Ile) + AMP + diphosphate. Its function is as follows. Catalyzes the attachment of isoleucine to tRNA(Ile). As IleRS can inadvertently accommodate and process structurally similar amino acids such as valine, to avoid such errors it has two additional distinct tRNA(Ile)-dependent editing activities. One activity is designated as 'pretransfer' editing and involves the hydrolysis of activated Val-AMP. The other activity is designated 'posttransfer' editing and involves deacylation of mischarged Val-tRNA(Ile). The chain is Isoleucine--tRNA ligase from Bacillus subtilis (strain 168).